We begin with the raw amino-acid sequence, 467 residues long: MLIFWTITLFLLGAAKGKEVCYEDLGCFSDTEPWGGTAIRPLKILPWSPEKIGTRFLLYTNENPNNFQILLLSDPSTIEASNFQMDRKTRFIIHGFIDKGDESWVTDMCKKLFEVEEVNCICVDWKKGSQATYTQAANNVRVVGAQVAQMLDILLTEYSYPPSKVHLIGHSLGAHVAGEAGSKTPGLSRITGLDPVEASFESTPEEVRLDPSDADFVDVIHTDAAPLIPFLGFGTNQQMGHLDFFPNGGESMPGCKKNALSQIVDLDGIWAGTRDFVACNHLRSYKYYLESILNPDGFAAYPCTSYKSFESDKCFPCPDQGCPQMGHYADKFAGRTSEEQQKFFLNTGEASNFARWRYGVSITLSGRTATGQIKVALFGNKGNTHQYSIFRGILKPGSTHSYEFDAKLDVGTIEKVKFLWNNNVINPTLPKVGATKITVQKGEEKTVYNFCSEDTVREDTLLTLTPC.

An N-terminal signal peptide occupies residues 1-17 (MLIFWTITLFLLGAAKG). Intrachain disulfides connect Cys21-Cys27 and Cys109-Cys120. The Nucleophile role is filled by Ser171. Catalysis depends on Asp194, which acts as the Charge relay system. Positions 205, 208, 210, and 213 each coordinate Ca(2+). Cysteines 255 and 279 form a disulfide. The active-site Charge relay system is the His281. Intrachain disulfides connect Cys303–Cys314, Cys317–Cys322, and Cys451–Cys467. In terms of domain architecture, PLAT spans 356-467 (WRYGVSITLS…EDTLLTLTPC (112 aa)).

This sequence belongs to the AB hydrolase superfamily. Lipase family. Pancreas.

It localises to the secreted. In terms of biological role, may function as inhibitor of dietary triglyceride digestion. Lacks detectable lipase activity towards triglycerides, diglycerides, phosphatidylcholine, galactolipids or cholesterol esters (in vitro). This Homo sapiens (Human) protein is Inactive pancreatic lipase-related protein 1 (PNLIPRP1).